The chain runs to 129 residues: KVFGRCELAAAMKRHGLDNYRGYSLGNWVCAAKFESNFNSQATNRNTDGSTDYGVLQINSRWWCNDGRTPGSRNLCNIPCSALLSSDITATVNCAKKIVSDGNGMNAWVAWRNRCKGTDVHAWIRGCRL.

The C-type lysozyme domain occupies 1–129 (KVFGRCELAA…VHAWIRGCRL (129 aa)). 4 disulfide bridges follow: C6-C127, C30-C115, C64-C80, and C76-C94. Catalysis depends on residues E35 and D52.

The protein belongs to the glycosyl hydrolase 22 family. Monomer.

Its subcellular location is the secreted. The enzyme catalyses Hydrolysis of (1-&gt;4)-beta-linkages between N-acetylmuramic acid and N-acetyl-D-glucosamine residues in a peptidoglycan and between N-acetyl-D-glucosamine residues in chitodextrins.. Functionally, lysozymes have primarily a bacteriolytic function; those in tissues and body fluids are associated with the monocyte-macrophage system and enhance the activity of immunoagents. This is Lysozyme C (LYZ) from Callipepla californica (California quail).